The chain runs to 55 residues: Spermatid nuclear transition protein 1 (55 aa).

Positions 1–42 (MSTSRKLKSQGMRRGKNRTPHKGVKRSGSKRKYRKSSLKSRK) are enriched in basic residues. The disordered stretch occupies residues 1–55 (MSTSRKLKSQGMRRGKNRTPHKGVKRSGSKRKYRKSSLKSRKRCDDANRNLRSHL). Phosphoserine is present on residues Ser-9, Ser-36, Ser-37, and Ser-40.

The protein belongs to the nuclear transition protein 1 family. In terms of tissue distribution, testis.

The protein resides in the nucleus. It is found in the chromosome. In terms of biological role, plays a key role in the replacement of histones to protamine in the elongating spermatids of mammals. In condensing spermatids, loaded onto the nucleosomes, where it promotes the recruitment and processing of protamines, which are responsible for histone eviction. In Bos taurus (Bovine), this protein is Spermatid nuclear transition protein 1 (TNP1).